Consider the following 242-residue polypeptide: Adenosylcobinamide-GDP ribazoletransferase (242 aa).

The next 5 membrane-spanning stretches (helical) occupy residues 31-51 (LLFY…LSTA), 52-72 (LMGA…VLLS), 109-129 (IAVV…VALI), 134-154 (GAAL…LFLT), and 188-208 (ILIG…CFIG).

The protein belongs to the CobS family. Mg(2+) serves as cofactor.

The protein localises to the cell inner membrane. It catalyses the reaction alpha-ribazole + adenosylcob(III)inamide-GDP = adenosylcob(III)alamin + GMP + H(+). It carries out the reaction alpha-ribazole 5'-phosphate + adenosylcob(III)inamide-GDP = adenosylcob(III)alamin 5'-phosphate + GMP + H(+). The protein operates within cofactor biosynthesis; adenosylcobalamin biosynthesis; adenosylcobalamin from cob(II)yrinate a,c-diamide: step 7/7. Its function is as follows. Joins adenosylcobinamide-GDP and alpha-ribazole to generate adenosylcobalamin (Ado-cobalamin). Also synthesizes adenosylcobalamin 5'-phosphate from adenosylcobinamide-GDP and alpha-ribazole 5'-phosphate. The chain is Adenosylcobinamide-GDP ribazoletransferase from Pseudomonas fluorescens (strain SBW25).